Reading from the N-terminus, the 245-residue chain is 2,3-bisphosphoglycerate-dependent phosphoglycerate mutase (245 aa).

Substrate is bound by residues 8 to 15 (RHGQSLWN), 21 to 22 (TG), Arg60, 87 to 90 (ERHY), Lys98, 114 to 115 (RR), and 183 to 184 (GN). The Tele-phosphohistidine intermediate role is filled by His9. Glu87 (proton donor/acceptor) is an active-site residue.

It belongs to the phosphoglycerate mutase family. BPG-dependent PGAM subfamily.

The enzyme catalyses (2R)-2-phosphoglycerate = (2R)-3-phosphoglycerate. It participates in carbohydrate degradation; glycolysis; pyruvate from D-glyceraldehyde 3-phosphate: step 3/5. In terms of biological role, catalyzes the interconversion of 2-phosphoglycerate and 3-phosphoglycerate. The sequence is that of 2,3-bisphosphoglycerate-dependent phosphoglycerate mutase from Bacillus cytotoxicus (strain DSM 22905 / CIP 110041 / 391-98 / NVH 391-98).